The sequence spans 475 residues: Subtilisin-like protease PopC (475 aa).

2 disordered regions span residues 1 to 27 (MKSY…EQGE) and 57 to 106 (TLPG…QTGA). Residues 165–475 (NRGMSSLAER…KTGKGLAVFR (311 aa)) form the Peptidase S8 domain. Residues D201, H243, and S423 each act as charge relay system in the active site.

It belongs to the peptidase S8 family. Interacts with PopD in non-starving cells.

The protein localises to the cytoplasm. Its subcellular location is the periplasm. The protein resides in the secreted. With respect to regulation, in non-starving cells, secretion and protease activity are inhibited by formation of a cytoplasmic complex with PopD. In response to starvation, PopD is degraded in a RelA- and FtsH(D)-dependent manner, thereby releasing pre-formed PopC for secretion. Secreted and active during starvation, and rapidly degraded upon secretion. Secretion is significantly and reversibly reduced by carbonyl cyanide m-chlorophenyl hydrazine (CCCP), which dissipates or reduces the proton motive force (PMF), and by nigericin, which affects the pH gradient. Functionally, required for fruiting body formation, a multicellular developmental program that is induced in response to starvation. Acts as a subtilisin-like protease that directly cleaves the CsgA precursor protein (p25) on the cell surface to generate the intercellular C-signal protein (p17) in starving cells. Preferentially acts in cis, i.e. PopC secreted by a cell only cleaves p25 on that cell. May also be important for processing of other protein(s) that are important for development. The polypeptide is Subtilisin-like protease PopC (Myxococcus xanthus (strain DK1622)).